The primary structure comprises 768 residues: DNA replication licensing factor MCM3 homolog 3 (768 aa).

Residues 290–497 enclose the MCM domain; sequence TFDLLGNSLA…IDRQISEHVA (208 aa). 340 to 347 lines the ATP pocket; the sequence is GDPSVAKS. The short motif at 472 to 475 is the Arginine finger element; the sequence is SRFD. Residues 661-670 show a composition bias toward basic and acidic residues; the sequence is EMKQQADHDA. A disordered region spans residues 661–690; sequence EMKQQADHDAGATGGTVDGHGSSGNDPMDV. The span at 672–682 shows a compositional bias: gly residues; sequence ATGGTVDGHGS.

The protein belongs to the MCM family.

The protein resides in the nucleus. It carries out the reaction ATP + H2O = ADP + phosphate + H(+). Functionally, acts as a factor that allows the DNA to undergo a single round of replication per cell cycle. Required for DNA replication and cell proliferation. May act as a component of the MCM complex which is the putative replicative helicase of the replication licensing system in eukaryotic cells. The polypeptide is DNA replication licensing factor MCM3 homolog 3 (ROA3) (Zea mays (Maize)).